The following is a 204-amino-acid chain: Putative t-SNARE coiled-coil homology domain-containing protein L657 (204 aa).

2 consecutive t-SNARE coiled-coil homology domains span residues 9-71 and 140-202; these read SDYY…MDHV and DNSR…IKHT. Positions 159–181 form a coiled coil; sequence VLEKQANDISNILDEQNNTLEII.

The sequence is that of Putative t-SNARE coiled-coil homology domain-containing protein L657 from Acanthamoeba polyphaga (Amoeba).